The following is a 76-amino-acid chain: Large ribosomal subunit protein bL31 (76 aa).

Belongs to the bacterial ribosomal protein bL31 family. Type A subfamily. Part of the 50S ribosomal subunit.

Functionally, binds the 23S rRNA. The chain is Large ribosomal subunit protein bL31 from Beijerinckia indica subsp. indica (strain ATCC 9039 / DSM 1715 / NCIMB 8712).